We begin with the raw amino-acid sequence, 155 residues long: Large ribosomal subunit protein uL15 (155 aa).

A compositionally biased stretch (basic and acidic residues) spans 1-13 (MKLNELRDCEGAT). The disordered stretch occupies residues 1-47 (MKLNELRDCEGATKNRKRIGRGIGSGTGKTGGRGVKGQKSRSGVSLN). Over residues 21-35 (RGIGSGTGKTGGRGV) the composition is skewed to gly residues.

Belongs to the universal ribosomal protein uL15 family. As to quaternary structure, part of the 50S ribosomal subunit.

In terms of biological role, binds to the 23S rRNA. The sequence is that of Large ribosomal subunit protein uL15 from Bartonella tribocorum (strain CIP 105476 / IBS 506).